The sequence spans 413 residues: Multifunctional CCA protein (413 aa).

Gly8 and Arg11 together coordinate ATP. Gly8 and Arg11 together coordinate CTP. Residues Asp21 and Asp23 each coordinate Mg(2+). Arg91, Arg137, and Arg140 together coordinate ATP. CTP-binding residues include Arg91, Arg137, and Arg140. Residues 228 to 329 (TGIHTLMVLA…LKVFDKADAW (102 aa)) form the HD domain.

This sequence belongs to the tRNA nucleotidyltransferase/poly(A) polymerase family. Bacterial CCA-adding enzyme type 1 subfamily. In terms of assembly, monomer. Can also form homodimers and oligomers. Mg(2+) is required as a cofactor. It depends on Ni(2+) as a cofactor.

It carries out the reaction a tRNA precursor + 2 CTP + ATP = a tRNA with a 3' CCA end + 3 diphosphate. The enzyme catalyses a tRNA with a 3' CCA end + 2 CTP + ATP = a tRNA with a 3' CCACCA end + 3 diphosphate. Its function is as follows. Catalyzes the addition and repair of the essential 3'-terminal CCA sequence in tRNAs without using a nucleic acid template. Adds these three nucleotides in the order of C, C, and A to the tRNA nucleotide-73, using CTP and ATP as substrates and producing inorganic pyrophosphate. tRNA 3'-terminal CCA addition is required both for tRNA processing and repair. Also involved in tRNA surveillance by mediating tandem CCA addition to generate a CCACCA at the 3' terminus of unstable tRNAs. While stable tRNAs receive only 3'-terminal CCA, unstable tRNAs are marked with CCACCA and rapidly degraded. This Aeromonas salmonicida (strain A449) protein is Multifunctional CCA protein.